Reading from the N-terminus, the 959-residue chain is Nucleoporin NUP100/NSP100 (959 aa).

Residues 1–104 (MFGNNRPMFG…NSSNASNGNT (104 aa)) are disordered. 3 FG repeats span residues 2–3 (FG), 9–10 (FG), and Gly17. The segment covering 12-36 (SNLSFGSNTSSFGGQQSQQPNSLFG) has biased composition (polar residues). An SLFG 1; approximate repeat occupies 21–24 (SSFG). The stretch at 33 to 36 (SLFG) is one SLFG 2 repeat. Residues 37–48 (NSNNNNNSTSNN) are compositionally biased toward low complexity. The stretch at 51 to 54 (SGFG) is one SLFG 3; approximate repeat. Composition is skewed to low complexity over residues 56 to 81 (FTSAAGSNSNSLFGNNNTQNNGAFGQ) and 92 to 104 (GSLNSSNASNGNT). An SLFG 4 repeat occupies 66–69 (SLFG). A GLFG 1; approximate repeat occupies 77–80 (GAFG). The SLFG 5; approximate repeat unit spans residues 89 to 92 (SPFG). Residues 105–106 (FG) form an FG 4 repeat. The GLFG 2; approximate repeat unit spans residues 112–115 (GSFG). Positions 121–136 (AFNNNSNSTNSPFGFN) are enriched in low complexity. The segment at 121-172 (AFNNNSNSTNSPFGFNKPNTGGTLFGSQNNNSAGTSSLFGGQSTSTTGTFGN) is disordered. One copy of the SLFG 6; approximate repeat lies at 131 to 134 (SPFG). Polar residues predominate over residues 137–153 (KPNTGGTLFGSQNNNSA). Residues 145 to 146 (FG) form an FG 5 repeat. Residues 154 to 172 (GTSSLFGGQSTSTTGTFGN) show a composition bias toward low complexity. Residues 157-160 (SLFG) form an SLFG 7 repeat. One copy of the GLFG 3; approximate repeat lies at 168–171 (GTFG). An SLFG 8; approximate repeat occupies 175-178 (SSFG). The stretch at 189–190 (FG) is one FG 6 repeat. The segment at 190-394 (GAGNNSQSNT…NNQQQQSTGL (205 aa)) is disordered. Over residues 192 to 245 (GNNSQSNTTGSLFGNQQSSAFGTNNQQGSLFGQQSQNTNNAFGNQNQLGGSSFG) the composition is skewed to polar residues. The stretch at 202–205 (SLFG) is one SLFG 9 repeat. The stretch at 210 to 213 (SAFG) is one SLFG 10; approximate repeat. The SLFG 11 repeat unit spans residues 220 to 223 (SLFG). Residues 233 to 234 (FG) form an FG 7 repeat. An SLFG 12; approximate repeat occupies 242–245 (SSFG). One copy of the SLFG 13 repeat lies at 253-256 (SLFG). A compositionally biased stretch (low complexity) spans 259–293 (NNTLGNTTNNRNGLFGQMNSSNQGSSNSGLFGQNS). 2 GLFG repeats span residues 271–274 (GLFG) and 287–290 (GLFG). A compositionally biased stretch (polar residues) spans 294-303 (MNSSTQGVFG). The GLFG 6; approximate repeat unit spans residues 300-303 (GVFG). The span at 304 to 317 (QNNNQMQINGNNNN) shows a compositional bias: low complexity. The SLFG 14 repeat unit spans residues 318–321 (SLFG). GLFG repeat units lie at residues 333–336 (GLFG), 345–348 (GLFG), 358–361 (GLFG), 379–382 (GLFG), and 393–396 (GLFG). Low complexity predominate over residues 336–352 (GQNNQQQGSGLFGQNSQ). Positions 353–377 (TSGSSGLFGQNNQKQPNTFTQSNTG) are enriched in polar residues. SLFG repeat units lie at residues 405-408 (SLFG), 417-420 (SLFG), and 436-439 (SLFG). The FG 8 repeat unit spans residues 448–449 (FG). The stretch at 462–465 (SLFG) is one SLFG 18 repeat. An SLFG 19; approximate repeat occupies 474 to 477 (SLFG). GLFG repeat units follow at residues 490–493 (GLFG), 506–509 (GLFG), and 523–526 (GLFG). An FG 9 repeat occupies 542–543 (FG). The stretch at 550–553 (GLFG) is one GLFG 15 repeat. One copy of the FG 10 repeat lies at 569-570 (FG). Disordered stretches follow at residues 672 to 697 (TLERSDRGSSTSNSITDPESSYLNSN) and 745 to 794 (DDQA…PMIE). A compositionally biased stretch (polar residues) spans 679 to 697 (GSSTSNSITDPESSYLNSN). A compositionally biased stretch (basic and acidic residues) spans 757 to 775 (LTEKAHSPQTDLKDDHDES). Phosphoserine occurs at positions 763 and 783. Positions 777-790 (PDPQSKSPNGSTSI) are enriched in polar residues. The Peptidase S59 domain maps to 814–956 (KNNYYISPSI…GTYSYTIDHP (143 aa)). The segment at 816 to 955 (NYYISPSIET…TGTYSYTIDH (140 aa)) is nucleoporin RNA-binding motif (NRM).

The protein belongs to the nucleoporin GLFG family. Component of the nuclear pore complex (NPC). NPC constitutes the exclusive means of nucleocytoplasmic transport. NPCs allow the passive diffusion of ions and small molecules and the active, nuclear transport receptor-mediated bidirectional transport of macromolecules such as proteins, RNAs, ribonucleoparticles (RNPs), and ribosomal subunits across the nuclear envelope. Due to its 8-fold rotational symmetry, all subunits are present with 8 copies or multiples thereof. Through its FG repeats NUP100 interacts with numerous karyopherins including KAP95, and MEX67.

It localises to the nucleus. Its subcellular location is the nuclear pore complex. The protein resides in the nucleus membrane. In terms of biological role, functions as a component of the nuclear pore complex (NPC). NPC components, collectively referred to as nucleoporins (NUPs), can play the role of both NPC structural components and of docking or interaction partners for transiently associated nuclear transport factors. Active directional transport is assured by both, a Phe-Gly (FG) repeat affinity gradient for these transport factors across the NPC and a transport cofactor concentration gradient across the nuclear envelope (GSP1 and GSP2 GTPases associated predominantly with GTP in the nucleus, with GDP in the cytoplasm). NUP100 plays an important role in several nuclear export and import pathways including poly(A)+ RNA and protein transport. This chain is Nucleoporin NUP100/NSP100 (NUP100), found in Saccharomyces cerevisiae (strain ATCC 204508 / S288c) (Baker's yeast).